A 427-amino-acid polypeptide reads, in one-letter code: Serine hydroxymethyltransferase (427 aa).

(6S)-5,6,7,8-tetrahydrofolate is bound by residues leucine 118 and 122–124; that span reads GHL. Lysine 227 bears the N6-(pyridoxal phosphate)lysine mark. (6S)-5,6,7,8-tetrahydrofolate contacts are provided by residues glutamate 243 and 351-353; that span reads SPF.

The protein belongs to the SHMT family. In terms of assembly, homodimer. Pyridoxal 5'-phosphate serves as cofactor.

Its subcellular location is the cytoplasm. It catalyses the reaction (6R)-5,10-methylene-5,6,7,8-tetrahydrofolate + glycine + H2O = (6S)-5,6,7,8-tetrahydrofolate + L-serine. It functions in the pathway one-carbon metabolism; tetrahydrofolate interconversion. The protein operates within amino-acid biosynthesis; glycine biosynthesis; glycine from L-serine: step 1/1. In terms of biological role, catalyzes the reversible interconversion of serine and glycine with tetrahydrofolate (THF) serving as the one-carbon carrier. This reaction serves as the major source of one-carbon groups required for the biosynthesis of purines, thymidylate, methionine, and other important biomolecules. Also exhibits THF-independent aldolase activity toward beta-hydroxyamino acids, producing glycine and aldehydes, via a retro-aldol mechanism. The sequence is that of Serine hydroxymethyltransferase from Thermotoga neapolitana (strain ATCC 49049 / DSM 4359 / NBRC 107923 / NS-E).